We begin with the raw amino-acid sequence, 302 residues long: MRNRTLADLDRVVALGGGHGLGRVLSSLSSLGSRLTGIVTTTDNGGSTGRIRRSEGGIAWGDMRNCLNQLITEPSVASAMFEYRFGGNGELSGHNLGNLMLKALDHLSVRPLEAINLIRNLLKVDAQLIPMSELPVDLMAIDDQGHEIYGEVNIDQLATPPQEIMLTPNVPATREAVQAINDADLILIGPGSFYTSLMPCLLLDELAQALRRTPAPMVYIGNLGRELSLPAASLTLVDKLAMMEQYIGKKVIDTVVVGPRVDVSAVNDRLVIQEVLEASDIPYRHDRQLLHNALEKALQALG.

The protein belongs to the gluconeogenesis factor family.

It localises to the cytoplasm. Required for morphogenesis under gluconeogenic growth conditions. The sequence is that of Putative gluconeogenesis factor (ybhK) from Salmonella typhi.